The sequence spans 183 residues: UPF0098 protein YbcL (183 aa).

An N-terminal signal peptide occupies residues 1 to 21; the sequence is MKTLIVSTVLAFITFSAQAAA. Residues C46 and C129 are joined by a disulfide bond.

Belongs to the UPF0098 family. As to quaternary structure, homodimer.

Its subcellular location is the periplasm. The sequence is that of UPF0098 protein YbcL (ybcL) from Escherichia coli (strain K12).